A 249-amino-acid chain; its full sequence is Pyridoxine 5'-phosphate synthase (249 aa).

Asparagine 7 lines the 3-amino-2-oxopropyl phosphate pocket. 9 to 10 (DH) is a 1-deoxy-D-xylulose 5-phosphate binding site. A 3-amino-2-oxopropyl phosphate-binding site is contributed by arginine 18. Histidine 43 (proton acceptor) is an active-site residue. 2 residues coordinate 1-deoxy-D-xylulose 5-phosphate: arginine 45 and histidine 50. The active-site Proton acceptor is the glutamate 70. Threonine 100 is a 1-deoxy-D-xylulose 5-phosphate binding site. Histidine 198 (proton donor) is an active-site residue. 3-amino-2-oxopropyl phosphate-binding positions include alanine 199 and 220–221 (GH).

The protein belongs to the PNP synthase family. In terms of assembly, homooctamer; tetramer of dimers.

The protein localises to the cytoplasm. It catalyses the reaction 3-amino-2-oxopropyl phosphate + 1-deoxy-D-xylulose 5-phosphate = pyridoxine 5'-phosphate + phosphate + 2 H2O + H(+). The protein operates within cofactor biosynthesis; pyridoxine 5'-phosphate biosynthesis; pyridoxine 5'-phosphate from D-erythrose 4-phosphate: step 5/5. Functionally, catalyzes the complicated ring closure reaction between the two acyclic compounds 1-deoxy-D-xylulose-5-phosphate (DXP) and 3-amino-2-oxopropyl phosphate (1-amino-acetone-3-phosphate or AAP) to form pyridoxine 5'-phosphate (PNP) and inorganic phosphate. The polypeptide is Pyridoxine 5'-phosphate synthase (Azoarcus sp. (strain BH72)).